The following is a 936-amino-acid chain: UPF0746 protein DDB_G0280787 (936 aa).

Residues 1-19 (MISNKRKEIDTIDGHHEKD) are compositionally biased toward basic and acidic residues. The segment at 1-30 (MISNKRKEIDTIDGHHEKDNDDDDSDGIDN) is disordered. Residues 44 to 78 (SGSTNYRELQIIAKSLGLASNGKKQLVYNRIEGYF) form the SAP domain. The segment at 91–110 (ETNQQEEKKEEEQQQPQPQE) is disordered.

The protein belongs to the UPF0746 family.

The protein is UPF0746 protein DDB_G0280787 of Dictyostelium discoideum (Social amoeba).